A 1232-amino-acid polypeptide reads, in one-letter code: DNA-directed RNA polymerase subunit beta (1232 aa).

The interval 1170–1232 is disordered; the sequence is SVDEDADELE…LDLDDFGDEH (63 aa). Positions 1171–1180 are enriched in acidic residues; the sequence is VDEDADELEV. The span at 1189-1198 shows a compositional bias: basic and acidic residues; the sequence is PEEKEEKEKE. Residues 1199–1232 are compositionally biased toward acidic residues; it reads DSDEYDDLREEDVEPDLEELSLDDLDLDDFGDEH.

Belongs to the RNA polymerase beta chain family. The RNAP catalytic core consists of 2 alpha, 1 beta, 1 beta' and 1 omega subunit. When a sigma factor is associated with the core the holoenzyme is formed, which can initiate transcription.

The catalysed reaction is RNA(n) + a ribonucleoside 5'-triphosphate = RNA(n+1) + diphosphate. In terms of biological role, DNA-dependent RNA polymerase catalyzes the transcription of DNA into RNA using the four ribonucleoside triphosphates as substrates. This chain is DNA-directed RNA polymerase subunit beta, found in Clostridium botulinum (strain Hall / ATCC 3502 / NCTC 13319 / Type A).